A 149-amino-acid polypeptide reads, in one-letter code: Nucleoside diphosphate kinase (149 aa).

ATP-binding residues include K9, F57, R85, T91, R102, and N112. H115 (pros-phosphohistidine intermediate) is an active-site residue.

The protein belongs to the NDK family. Mg(2+) serves as cofactor.

It localises to the cytoplasm. The enzyme catalyses a 2'-deoxyribonucleoside 5'-diphosphate + ATP = a 2'-deoxyribonucleoside 5'-triphosphate + ADP. The catalysed reaction is a ribonucleoside 5'-diphosphate + ATP = a ribonucleoside 5'-triphosphate + ADP. Functionally, major role in the synthesis of nucleoside triphosphates other than ATP. The ATP gamma phosphate is transferred to the NDP beta phosphate via a ping-pong mechanism, using a phosphorylated active-site intermediate. The polypeptide is Nucleoside diphosphate kinase (Methanosarcina mazei (strain ATCC BAA-159 / DSM 3647 / Goe1 / Go1 / JCM 11833 / OCM 88) (Methanosarcina frisia)).